A 178-amino-acid polypeptide reads, in one-letter code: Large ribosomal subunit protein uL6 (178 aa).

The protein belongs to the universal ribosomal protein uL6 family. In terms of assembly, part of the 50S ribosomal subunit.

In terms of biological role, this protein binds to the 23S rRNA, and is important in its secondary structure. It is located near the subunit interface in the base of the L7/L12 stalk, and near the tRNA binding site of the peptidyltransferase center. This Francisella tularensis subsp. tularensis (strain WY96-3418) protein is Large ribosomal subunit protein uL6.